The primary structure comprises 711 residues: Progesterone receptor (711 aa).

The segment at 1–347 (MEDKSKQCLQ…YGFDALPRKI (347 aa)) is modulating, Pro-Rich. 2 consecutive NR C4-type zinc fingers follow at residues 348-368 (CLICSDEASGCHYGALTCGSC) and 384-408 (CAGRNDCIGDKIRRKNCPSCRLKKC). A DNA-binding region (nuclear receptor) is located at residues 348–420 (CLICSDEASG…AGMVLGGRKF (73 aa)). Positions 457–691 (QEVQYFPELL…EFPEMMTEVI (235 aa)) constitute an NR LBD domain.

Belongs to the nuclear hormone receptor family. NR3 subfamily. In terms of tissue distribution, expressed in all tissues examined: highly expressed in testis and brain. Also expressed in heart, lung, liver, kidney, stomach and small intestine.

The protein resides in the nucleus. Its function is as follows. The steroid hormones and their receptors are involved in the regulation of eukaryotic gene expression and affect cellular proliferation and differentiation in target tissues. This Rana dybowskii (Dybovsky's frog) protein is Progesterone receptor (pgr).